Consider the following 702-residue polypeptide: Ribosomal RNA large subunit methyltransferase K/L (702 aa).

A THUMP domain is found at 43-154 (LIYQSLMWSR…KETASIALDL (112 aa)).

Belongs to the methyltransferase superfamily. RlmKL family.

It localises to the cytoplasm. It catalyses the reaction guanosine(2445) in 23S rRNA + S-adenosyl-L-methionine = N(2)-methylguanosine(2445) in 23S rRNA + S-adenosyl-L-homocysteine + H(+). It carries out the reaction guanosine(2069) in 23S rRNA + S-adenosyl-L-methionine = N(2)-methylguanosine(2069) in 23S rRNA + S-adenosyl-L-homocysteine + H(+). Specifically methylates the guanine in position 2445 (m2G2445) and the guanine in position 2069 (m7G2069) of 23S rRNA. This Salmonella agona (strain SL483) protein is Ribosomal RNA large subunit methyltransferase K/L.